Reading from the N-terminus, the 192-residue chain is Holliday junction branch migration complex subunit RuvA (192 aa).

The interval 1-61 is domain I; the sequence is MFEYLKGIVA…DTGITLYGFL (61 aa). The segment at 62–137 is domain II; that stretch reads SLEDKELFLK…KLGDYVKKSA (76 aa). The tract at residues 137 to 140 is flexible linker; the sequence is AVAT. The interval 141-192 is domain III; it reads DLTPSLQDALLALVALGYTQKEVDRITPKLAKLPENTADGYIKEALALLLKK.

The protein belongs to the RuvA family. In terms of assembly, homotetramer. Forms an RuvA(8)-RuvB(12)-Holliday junction (HJ) complex. HJ DNA is sandwiched between 2 RuvA tetramers; dsDNA enters through RuvA and exits via RuvB. An RuvB hexamer assembles on each DNA strand where it exits the tetramer. Each RuvB hexamer is contacted by two RuvA subunits (via domain III) on 2 adjacent RuvB subunits; this complex drives branch migration. In the full resolvosome a probable DNA-RuvA(4)-RuvB(12)-RuvC(2) complex forms which resolves the HJ.

It localises to the cytoplasm. Functionally, the RuvA-RuvB-RuvC complex processes Holliday junction (HJ) DNA during genetic recombination and DNA repair, while the RuvA-RuvB complex plays an important role in the rescue of blocked DNA replication forks via replication fork reversal (RFR). RuvA specifically binds to HJ cruciform DNA, conferring on it an open structure. The RuvB hexamer acts as an ATP-dependent pump, pulling dsDNA into and through the RuvAB complex. HJ branch migration allows RuvC to scan DNA until it finds its consensus sequence, where it cleaves and resolves the cruciform DNA. The polypeptide is Holliday junction branch migration complex subunit RuvA (Lactobacillus gasseri (strain ATCC 33323 / DSM 20243 / BCRC 14619 / CIP 102991 / JCM 1131 / KCTC 3163 / NCIMB 11718 / NCTC 13722 / AM63)).